Reading from the N-terminus, the 209-residue chain is Guanylate kinase (209 aa).

The Guanylate kinase-like domain maps to glycine 9–isoleucine 188. Serine 16–threonine 23 contacts ATP.

Belongs to the guanylate kinase family.

It localises to the cytoplasm. The enzyme catalyses GMP + ATP = GDP + ADP. Functionally, essential for recycling GMP and indirectly, cGMP. The sequence is that of Guanylate kinase from Ehrlichia ruminantium (strain Gardel).